A 651-amino-acid polypeptide reads, in one-letter code: Probable potassium transport system protein Kup (651 aa).

12 helical membrane passes run 41-61 (LVLG…IYAF), 82-102 (VVSL…VLFV), 130-150 (LILG…VITP), 163-183 (IVAP…LVTL), 194-214 (VAIV…ASGL), 235-255 (FLTV…LAMT), 276-296 (WLWI…AFIL), 309-329 (MIPS…TVIA), 366-386 (IYIP…VLGF), 395-415 (AYGI…YIAM), 426-446 (ALPI…ANII), and 450-470 (EGGW…WTWV).

This sequence belongs to the HAK/KUP transporter (TC 2.A.72) family.

It localises to the cell inner membrane. The catalysed reaction is K(+)(in) + H(+)(in) = K(+)(out) + H(+)(out). Functionally, transport of potassium into the cell. Likely operates as a K(+):H(+) symporter. In Brucella abortus (strain S19), this protein is Probable potassium transport system protein Kup.